The sequence spans 304 residues: Lipoyl synthase (304 aa).

[4Fe-4S] cluster-binding residues include Cys-41, Cys-46, Cys-52, Cys-68, Cys-72, Cys-75, and Ser-281. In terms of domain architecture, Radical SAM core spans 54-270; it reads GARRTATFMI…RKIAMEKGFK (217 aa). The disordered stretch occupies residues 282–304; the sequence is YHADEQVNEAAKEKQRQGEEQLN.

This sequence belongs to the radical SAM superfamily. Lipoyl synthase family. The cofactor is [4Fe-4S] cluster.

Its subcellular location is the cytoplasm. It carries out the reaction [[Fe-S] cluster scaffold protein carrying a second [4Fe-4S](2+) cluster] + N(6)-octanoyl-L-lysyl-[protein] + 2 oxidized [2Fe-2S]-[ferredoxin] + 2 S-adenosyl-L-methionine + 4 H(+) = [[Fe-S] cluster scaffold protein] + N(6)-[(R)-dihydrolipoyl]-L-lysyl-[protein] + 4 Fe(3+) + 2 hydrogen sulfide + 2 5'-deoxyadenosine + 2 L-methionine + 2 reduced [2Fe-2S]-[ferredoxin]. Its pathway is protein modification; protein lipoylation via endogenous pathway; protein N(6)-(lipoyl)lysine from octanoyl-[acyl-carrier-protein]. In terms of biological role, catalyzes the radical-mediated insertion of two sulfur atoms into the C-6 and C-8 positions of the octanoyl moiety bound to the lipoyl domains of lipoate-dependent enzymes, thereby converting the octanoylated domains into lipoylated derivatives. This Staphylococcus epidermidis (strain ATCC 35984 / DSM 28319 / BCRC 17069 / CCUG 31568 / BM 3577 / RP62A) protein is Lipoyl synthase.